Reading from the N-terminus, the 207-residue chain is Small ribosomal subunit protein uS4 (207 aa).

The segment at 31–55 (KCKLDSKPGQHGRTSGARTSDYGTQ) is disordered. Residues 42 to 53 (GRTSGARTSDYG) show a composition bias toward polar residues. The region spanning 97–160 (SRLDNVVYRM…KKQARIVEAL (64 aa)) is the S4 RNA-binding domain.

It belongs to the universal ribosomal protein uS4 family. Part of the 30S ribosomal subunit. Contacts protein S5. The interaction surface between S4 and S5 is involved in control of translational fidelity.

Functionally, one of the primary rRNA binding proteins, it binds directly to 16S rRNA where it nucleates assembly of the body of the 30S subunit. In terms of biological role, with S5 and S12 plays an important role in translational accuracy. The sequence is that of Small ribosomal subunit protein uS4 from Burkholderia ambifaria (strain MC40-6).